A 129-amino-acid chain; its full sequence is UPF0146 protein VNG_2609C (129 aa).

It belongs to the UPF0146 family.

The polypeptide is UPF0146 protein VNG_2609C (Halobacterium salinarum (strain ATCC 700922 / JCM 11081 / NRC-1) (Halobacterium halobium)).